The primary structure comprises 193 residues: Potassium-transporting ATPase KdpC subunit (193 aa).

Residues 7 to 27 (PLVVIFVVLTAVTGLAYPAVM) form a helical membrane-spanning segment.

The protein belongs to the KdpC family. In terms of assembly, the system is composed of three essential subunits: KdpA, KdpB and KdpC.

Its subcellular location is the cell inner membrane. In terms of biological role, part of the high-affinity ATP-driven potassium transport (or Kdp) system, which catalyzes the hydrolysis of ATP coupled with the electrogenic transport of potassium into the cytoplasm. This subunit acts as a catalytic chaperone that increases the ATP-binding affinity of the ATP-hydrolyzing subunit KdpB by the formation of a transient KdpB/KdpC/ATP ternary complex. In Burkholderia ambifaria (strain ATCC BAA-244 / DSM 16087 / CCUG 44356 / LMG 19182 / AMMD) (Burkholderia cepacia (strain AMMD)), this protein is Potassium-transporting ATPase KdpC subunit.